The following is a 382-amino-acid chain: UDP-N-acetylglucosamine--N-acetylmuramyl-(pentapeptide) pyrophosphoryl-undecaprenol N-acetylglucosamine transferase (382 aa).

Residues 11–13 (TGG), asparagine 117, arginine 160, serine 209, and glutamine 311 each bind UDP-N-acetyl-alpha-D-glucosamine.

It belongs to the glycosyltransferase 28 family. MurG subfamily.

The protein localises to the cell inner membrane. It carries out the reaction di-trans,octa-cis-undecaprenyl diphospho-N-acetyl-alpha-D-muramoyl-L-alanyl-D-glutamyl-meso-2,6-diaminopimeloyl-D-alanyl-D-alanine + UDP-N-acetyl-alpha-D-glucosamine = di-trans,octa-cis-undecaprenyl diphospho-[N-acetyl-alpha-D-glucosaminyl-(1-&gt;4)]-N-acetyl-alpha-D-muramoyl-L-alanyl-D-glutamyl-meso-2,6-diaminopimeloyl-D-alanyl-D-alanine + UDP + H(+). Its pathway is cell wall biogenesis; peptidoglycan biosynthesis. Cell wall formation. Catalyzes the transfer of a GlcNAc subunit on undecaprenyl-pyrophosphoryl-MurNAc-pentapeptide (lipid intermediate I) to form undecaprenyl-pyrophosphoryl-MurNAc-(pentapeptide)GlcNAc (lipid intermediate II). This is UDP-N-acetylglucosamine--N-acetylmuramyl-(pentapeptide) pyrophosphoryl-undecaprenol N-acetylglucosamine transferase from Rickettsia akari (strain Hartford).